The sequence spans 313 residues: D-alanine--D-alanine ligase (313 aa).

The ATP-grasp domain occupies 108 to 308 (KLVWQQTGVP…YSELVVKVLS (201 aa)). Position 138–193 (138–193 (VAKLGLPLFVKPASEGSSVAVLKVKTADALPAALAEAATHDKIVIVEKSIEGGGEY)) interacts with ATP. 3 residues coordinate Mg(2+): Asp-262, Glu-275, and Asn-277.

The protein belongs to the D-alanine--D-alanine ligase family. The cofactor is Mg(2+). Mn(2+) is required as a cofactor.

The protein localises to the cytoplasm. It catalyses the reaction 2 D-alanine + ATP = D-alanyl-D-alanine + ADP + phosphate + H(+). It functions in the pathway cell wall biogenesis; peptidoglycan biosynthesis. Functionally, cell wall formation. In Burkholderia multivorans (strain ATCC 17616 / 249), this protein is D-alanine--D-alanine ligase.